A 337-amino-acid chain; its full sequence is Peroxisome biogenesis factor 10 (337 aa).

Residues 1 to 24 (MKNDNKLQKEALMRLSQLRFPFAD) are Peroxisomal matrix-facing. A helical membrane pass occupies residues 25–54 (APSIVQAHQKDEQIQGLLIMKVTELCKLIK). Position 55 (S55) is a topological domain, cytoplasmic. The chain crosses the membrane as a helical span at residues 56-77 (QLFVNSYPKELSIFAKLLYLLF). Topologically, residues 78-105 (TTGRRGRTLGEEYVDLTYTNRKGTRLAG) are peroxisomal matrix. A helical transmembrane segment spans residues 106–138 (RLKMIVFAFAYPLCPYFITKLYKKIMKNNKESK). The Cytoplasmic portion of the chain corresponds to 139–145 (IEDTESV). A helical transmembrane segment spans residues 146–166 (AAFCKGLLDFILDVHMTLFYF). The Peroxisomal matrix portion of the chain corresponds to 167–202 (KGAFYSISKRIFGMRYVFKHILSKNEANFREEGSQK). The chain crosses the membrane as a helical span at residues 203–222 (YKVLGYILLAQNVMKWYPVL). Over 223–337 (TSTLGSWIYG…QPQEILVLRQ (115 aa)) the chain is Cytoplasmic. Residues C286, C289, C301, H303, C306, C309, C320, and C323 each coordinate Zn(2+). The segment at 286 to 327 (CILCLMNMSDPSCAPCGHLFCWSCLMSWCKERPECPLCRQHC) adopts an RING-type zinc-finger fold.

It belongs to the pex2/pex10/pex12 family. Component of the PEX2-PEX10-PEX12 retrotranslocation channel, composed of PEX2, PEX10 and PEX12.

It localises to the peroxisome membrane. It catalyses the reaction S-ubiquitinyl-[E2 ubiquitin-conjugating enzyme]-L-cysteine + [acceptor protein]-L-lysine = [E2 ubiquitin-conjugating enzyme]-L-cysteine + N(6)-ubiquitinyl-[acceptor protein]-L-lysine.. It functions in the pathway protein modification; protein ubiquitination. Its activity is regulated as follows. The E3 ubiquitin-protein ligase activity is stimulated by PEX12. In terms of biological role, E3 ubiquitin-protein ligase component of a retrotranslocation channel required for peroxisome organization by mediating export of the PEX5 receptor from peroxisomes to the cytosol, thereby promoting PEX5 recycling. The retrotranslocation channel is composed of PEX2, PEX10 and PEX12; each subunit contributing transmembrane segments that coassemble into an open channel that specifically allows the passage of PEX5 through the peroxisomal membrane. PEX10 also regulates PEX5 recycling by acting as a E3 ubiquitin-protein ligase. When PEX5 recycling is compromised, PEX10 catalyzes polyubiquitination of PEX5 during its passage through the retrotranslocation channel, leading to its degradation. The protein is Peroxisome biogenesis factor 10 of Saccharomyces cerevisiae (strain ATCC 204508 / S288c) (Baker's yeast).